Consider the following 505-residue polypeptide: Lysine--tRNA ligase (505 aa).

Glu-415 and Glu-422 together coordinate Mg(2+).

This sequence belongs to the class-II aminoacyl-tRNA synthetase family. As to quaternary structure, homodimer. The cofactor is Mg(2+).

The protein localises to the cytoplasm. The catalysed reaction is tRNA(Lys) + L-lysine + ATP = L-lysyl-tRNA(Lys) + AMP + diphosphate. This Citrobacter koseri (strain ATCC BAA-895 / CDC 4225-83 / SGSC4696) protein is Lysine--tRNA ligase.